The following is a 299-amino-acid chain: Delta-9 desaturase-like 3 protein (299 aa).

The next 2 membrane-spanning stretches (helical) occupy residues 38 to 57 and 58 to 76; these read AVGA…TWEA and FRFA…TFSY. The Histidine box-1 signature appears at 77–82; that stretch reads HRNLTH. The short motif at 114 to 118 is the Histidine box-2 element; that stretch reads HRFHH. Helical transmembrane passes span 174-194 and 198-218; these read IGLH…LPYL and VGVG…ACHI. The Histidine box-3 signature appears at 246–250; that stretch reads HNNHH. A helical membrane pass occupies residues 262–282; the sequence is WYQVDLTWYLIWFFQVLGLAT.

This sequence belongs to the fatty acid desaturase type 1 family. Fe cation is required as a cofactor.

Its subcellular location is the endoplasmic reticulum membrane. Its pathway is lipid metabolism; polyunsaturated fatty acid biosynthesis. The protein is Delta-9 desaturase-like 3 protein of Arabidopsis thaliana (Mouse-ear cress).